A 547-amino-acid chain; its full sequence is Cytochrome P450 78A1 (547 aa).

The segment covering 84–94 has biased composition (low complexity); it reads ASSRCPGAAAP. The disordered stretch occupies residues 84-104; sequence ASSRCPGAAAPRPRRDGPRRR. Cys-490 contacts heme.

The protein belongs to the cytochrome P450 family. The cofactor is heme. In terms of tissue distribution, shoot apex.

The protein is Cytochrome P450 78A1 (CYP78A1) of Zea mays (Maize).